The sequence spans 520 residues: Pleckstrin homology domain-containing family A member 8 (520 aa).

One can recognise a PH domain in the interval 1–93; it reads MEGVLYKWTN…WLVALGSAKA (93 aa). The residue at position 139 (T139) is a Phosphothreonine. Phosphoserine is present on S145. A Phosphothreonine modification is found at T153. A compositionally biased stretch (basic and acidic residues) spans 275–285; sequence GEESLGNHDSD. A disordered region spans residues 275–305; sequence GEESLGNHDSDLAQPELHSTSSSPESHWEED. Residues 311–520 are glycolipid transfer protein homology domain; sequence TFFSTMNTSF…VHGLESDEVV (210 aa).

Homodimer. Interacts with ARF1; the interaction together with phosphatidylinositol 4-phosphate binding is required for FAPP2 GlcCer transfer ability.

The protein resides in the cytoplasm. Its subcellular location is the golgi apparatus. It localises to the trans-Golgi network membrane. The protein localises to the membrane. Cargo transport protein that is required for apical transport from the trans-Golgi network (TGN). Transports AQP2 from the trans-Golgi network (TGN) to sites of AQP2 phosphorylation. Mediates the non-vesicular transport of glucosylceramide (GlcCer) from the trans-Golgi network (TGN) to the plasma membrane and plays a pivotal role in the synthesis of complex glycosphingolipids. Binding of both phosphatidylinositol 4-phosphate (PIP) and ARF1 are essential for the GlcCer transfer ability. Also required for primary cilium formation, possibly by being involved in the transport of raft lipids to the apical membrane, and for membrane tubulation. The sequence is that of Pleckstrin homology domain-containing family A member 8 (PLEKHA8) from Bos taurus (Bovine).